Consider the following 422-residue polypeptide: GTPase Obg (422 aa).

Residues 1–158 (MFYDRARIFV…RWLDLELKLL (158 aa)) form the Obg domain. An OBG-type G domain is found at 159-329 (ADVGLVGFPN…LVYRVSALLE (171 aa)). GTP-binding positions include 165–172 (GFPNAGKS), 190–194 (FTTIT), 212–215 (DIPG), 282–285 (NKMD), and 310–312 (SAV). Residues serine 172 and threonine 192 each coordinate Mg(2+). The OCT domain occupies 337–422 (VPEALERPVI…IGDYEFEYVE (86 aa)).

The protein belongs to the TRAFAC class OBG-HflX-like GTPase superfamily. OBG GTPase family. Monomer. Requires Mg(2+) as cofactor.

The protein localises to the cytoplasm. Its function is as follows. An essential GTPase which binds GTP, GDP and possibly (p)ppGpp with moderate affinity, with high nucleotide exchange rates and a fairly low GTP hydrolysis rate. Plays a role in control of the cell cycle, stress response, ribosome biogenesis and in those bacteria that undergo differentiation, in morphogenesis control. The polypeptide is GTPase Obg (Pelotomaculum thermopropionicum (strain DSM 13744 / JCM 10971 / SI)).